The following is a 369-amino-acid chain: Chorismate synthase (369 aa).

Residues R48 and R54 each contribute to the NADP(+) site. Residues 125-127 (RSS), 238-239 (NA), G278, 293-297 (KPTSS), and R319 contribute to the FMN site.

This sequence belongs to the chorismate synthase family. Homotetramer. The cofactor is FMNH2.

The enzyme catalyses 5-O-(1-carboxyvinyl)-3-phosphoshikimate = chorismate + phosphate. The protein operates within metabolic intermediate biosynthesis; chorismate biosynthesis; chorismate from D-erythrose 4-phosphate and phosphoenolpyruvate: step 7/7. Its function is as follows. Catalyzes the anti-1,4-elimination of the C-3 phosphate and the C-6 proR hydrogen from 5-enolpyruvylshikimate-3-phosphate (EPSP) to yield chorismate, which is the branch point compound that serves as the starting substrate for the three terminal pathways of aromatic amino acid biosynthesis. This reaction introduces a second double bond into the aromatic ring system. The polypeptide is Chorismate synthase (Burkholderia mallei (strain ATCC 23344)).